Reading from the N-terminus, the 96-residue chain is Co-chaperonin GroES (96 aa).

It belongs to the GroES chaperonin family. In terms of assembly, heptamer of 7 subunits arranged in a ring. Interacts with the chaperonin GroEL.

It is found in the cytoplasm. Functionally, together with the chaperonin GroEL, plays an essential role in assisting protein folding. The GroEL-GroES system forms a nano-cage that allows encapsulation of the non-native substrate proteins and provides a physical environment optimized to promote and accelerate protein folding. GroES binds to the apical surface of the GroEL ring, thereby capping the opening of the GroEL channel. In Haemophilus influenzae (strain ATCC 51907 / DSM 11121 / KW20 / Rd), this protein is Co-chaperonin GroES.